The chain runs to 121 residues: Ribosome-binding factor A (121 aa).

It belongs to the RbfA family. Monomer. Binds 30S ribosomal subunits, but not 50S ribosomal subunits or 70S ribosomes.

It localises to the cytoplasm. In terms of biological role, one of several proteins that assist in the late maturation steps of the functional core of the 30S ribosomal subunit. Associates with free 30S ribosomal subunits (but not with 30S subunits that are part of 70S ribosomes or polysomes). Required for efficient processing of 16S rRNA. May interact with the 5'-terminal helix region of 16S rRNA. The chain is Ribosome-binding factor A from Clostridium tetani (strain Massachusetts / E88).